We begin with the raw amino-acid sequence, 227 residues long: Protein GrpE (227 aa).

The segment covering 1-18 (MTQGNQKTEGNPPEQVTV) has biased composition (polar residues). 2 disordered regions span residues 1-57 (MTQG…GAAT) and 193-227 (TEEGDGEAAATDEPTAAAAETRPPESDDNAGASGD). Residues 19–35 (TDKRRIDPETGEVRHVP) are compositionally biased toward basic and acidic residues. 2 stretches are compositionally biased toward low complexity: residues 41 to 50 (GGTAPQAATA) and 199 to 213 (EAAATDEPTAAAAET).

Belongs to the GrpE family. Homodimer.

Its subcellular location is the cytoplasm. Its function is as follows. Participates actively in the response to hyperosmotic and heat shock by preventing the aggregation of stress-denatured proteins, in association with DnaK and GrpE. It is the nucleotide exchange factor for DnaK and may function as a thermosensor. Unfolded proteins bind initially to DnaJ; upon interaction with the DnaJ-bound protein, DnaK hydrolyzes its bound ATP, resulting in the formation of a stable complex. GrpE releases ADP from DnaK; ATP binding to DnaK triggers the release of the substrate protein, thus completing the reaction cycle. Several rounds of ATP-dependent interactions between DnaJ, DnaK and GrpE are required for fully efficient folding. The sequence is that of Protein GrpE from Mycolicibacterium paratuberculosis (strain ATCC BAA-968 / K-10) (Mycobacterium paratuberculosis).